The primary structure comprises 267 residues: Ribosomal RNA small subunit methyltransferase A (267 aa).

S-adenosyl-L-methionine is bound by residues Asn18, Leu20, Gly45, Glu66, Asp91, and Asn112.

The protein belongs to the class I-like SAM-binding methyltransferase superfamily. rRNA adenine N(6)-methyltransferase family. RsmA subfamily.

The protein resides in the cytoplasm. It carries out the reaction adenosine(1518)/adenosine(1519) in 16S rRNA + 4 S-adenosyl-L-methionine = N(6)-dimethyladenosine(1518)/N(6)-dimethyladenosine(1519) in 16S rRNA + 4 S-adenosyl-L-homocysteine + 4 H(+). In terms of biological role, specifically dimethylates two adjacent adenosines (A1518 and A1519) in the loop of a conserved hairpin near the 3'-end of 16S rRNA in the 30S particle. May play a critical role in biogenesis of 30S subunits. In Shewanella sediminis (strain HAW-EB3), this protein is Ribosomal RNA small subunit methyltransferase A.